Reading from the N-terminus, the 508-residue chain is Prenylcysteine oxidase 1 (508 aa).

A signal peptide spans 1–31; the sequence is MDPAAPGLACSILRLGLGLLLLCSWWYPGSA. N-linked (GlcNAc...) asparagine glycosylation is found at N199, N291, and N356.

It belongs to the prenylcysteine oxidase family. FAD is required as a cofactor.

Its subcellular location is the lysosome. It carries out the reaction an S-polyprenyl-L-cysteine + O2 + H2O = a polyprenal + L-cysteine + H2O2. The catalysed reaction is S-(2E,6E)-farnesyl-L-cysteine + O2 + H2O = (2E,6E)-farnesal + L-cysteine + H2O2. It catalyses the reaction [(2E,6E,10E)-geranylgeranyl]-L-cysteine + O2 + H2O = (2E,6E,10E)-geranylgeranial + L-cysteine + H2O2. Its function is as follows. Prenylcysteine oxidase that cleaves the thioether bond of prenyl-L-cysteines, such as farnesylcysteine and geranylgeranylcysteine. Only active against free prenylcysteines and not prenylcysteine residues within prenylated proteins or peptides. Involved in the final step in the degradation of prenylated proteins, by degrading prenylcysteines after the protein has been degraded. The polypeptide is Prenylcysteine oxidase 1 (Bos taurus (Bovine)).